The chain runs to 905 residues: Stonin-2 (905 aa).

Disordered stretches follow at residues 1 to 121 (MTTL…HQET), 178 to 205 (EQTS…VEME), and 244 to 263 (LPPV…SVIP). The segment covering 40-50 (SSSPDQSESSS) has biased composition (low complexity). Residues 60–73 (SQDHSHSEQDDSSE) are compositionally biased toward basic and acidic residues. Residues 85 to 94 (PGSPEQPPPD) are compositionally biased toward pro residues. Over residues 178–196 (EQTSGQASGADSTDNSSSL) the composition is skewed to polar residues. A compositionally biased stretch (pro residues) spans 244 to 256 (LPPVTSPLKPNTP). Thr255 carries the phosphothreonine modification. Ser281, Ser287, and Ser302 each carry phosphoserine. Short sequence motifs (NPF) lie at residues 313 to 315 (NPF) and 329 to 331 (NPF). The SHD domain maps to 427-560 (GWPMMLRIPE…DLPVLSMDLS (134 aa)). In terms of domain architecture, MHD spans 568–878 (EEEITVDVRD…SYQVALGSIW (311 aa)). Ser762 carries the phosphoserine modification.

Belongs to the Stoned B family. Interacts with the second C2 domain of synaptotagmins SYT1 and SYT2. Interacts with EPS15, EPS15R and ITSN1. Interacts indirectly with the AP-2 adapter complex. Interacts with TOR1A and COPS4; the interaction controls STON2 protein stability. Post-translationally, phosphorylated in vitro by PKD. In terms of processing, neddylated; deneddylated via its interaction with the COP9 signalosome (CSN) complex through TOR1A and COPS4. Ubiquitinated; leading to its degradation. In terms of tissue distribution, ubiquitous.

It is found in the cytoplasm. The protein localises to the membrane. It localises to the synapse. Its subcellular location is the synaptosome. Adapter protein involved in endocytic machinery. Involved in the synaptic vesicle recycling. May facilitate clathrin-coated vesicle uncoating. The chain is Stonin-2 (STON2) from Homo sapiens (Human).